The following is a 618-amino-acid chain: 1-deoxy-D-xylulose-5-phosphate synthase (618 aa).

Thiamine diphosphate-binding positions include His-72 and 113 to 115 (GHA). Asp-144 serves as a coordination point for Mg(2+). Thiamine diphosphate-binding positions include 145-146 (GA), Asn-173, His-284, and Glu-359. Asn-173 lines the Mg(2+) pocket.

The protein belongs to the transketolase family. DXPS subfamily. In terms of assembly, homodimer. It depends on Mg(2+) as a cofactor. Thiamine diphosphate serves as cofactor.

It catalyses the reaction D-glyceraldehyde 3-phosphate + pyruvate + H(+) = 1-deoxy-D-xylulose 5-phosphate + CO2. It functions in the pathway metabolic intermediate biosynthesis; 1-deoxy-D-xylulose 5-phosphate biosynthesis; 1-deoxy-D-xylulose 5-phosphate from D-glyceraldehyde 3-phosphate and pyruvate: step 1/1. Its function is as follows. Catalyzes the acyloin condensation reaction between C atoms 2 and 3 of pyruvate and glyceraldehyde 3-phosphate to yield 1-deoxy-D-xylulose-5-phosphate (DXP). The sequence is that of 1-deoxy-D-xylulose-5-phosphate synthase from Dictyoglomus thermophilum (strain ATCC 35947 / DSM 3960 / H-6-12).